We begin with the raw amino-acid sequence, 261 residues long: Pyridoxine-5'-phosphate oxidase (261 aa).

Residue 42–45 (RGDR) participates in pyridoxal 5'-phosphate binding. Position 95 to 98 (95 to 98 (RMLL)) interacts with FMN. Lysine 100 is a binding site for pyridoxal 5'-phosphate. Residues 110–111 (FT), 116–117 (RK), and glutamine 139 contribute to the FMN site. Residues tyrosine 157, arginine 161, and serine 165 each coordinate pyridoxal 5'-phosphate. Residues 174 to 175 (QS) and tryptophan 219 contribute to the FMN site. 225-227 (RLH) serves as a coordination point for pyridoxal 5'-phosphate. Arginine 229 contributes to the FMN binding site. Phosphothreonine is present on threonine 238. Serine 241 is subject to Phosphoserine.

This sequence belongs to the pyridoxamine 5'-phosphate oxidase family. As to quaternary structure, homodimer. It depends on FMN as a cofactor. In terms of tissue distribution, detected in adult liver.

The enzyme catalyses pyridoxamine 5'-phosphate + O2 + H2O = pyridoxal 5'-phosphate + H2O2 + NH4(+). It carries out the reaction pyridoxine 5'-phosphate + O2 = pyridoxal 5'-phosphate + H2O2. It functions in the pathway cofactor metabolism; pyridoxal 5'-phosphate salvage; pyridoxal 5'-phosphate from pyridoxamine 5'-phosphate: step 1/1. Its pathway is cofactor metabolism; pyridoxal 5'-phosphate salvage; pyridoxal 5'-phosphate from pyridoxine 5'-phosphate: step 1/1. Functionally, catalyzes the oxidation of either pyridoxine 5'-phosphate (PNP) or pyridoxamine 5'-phosphate (PMP) into pyridoxal 5'-phosphate (PLP). This Rattus norvegicus (Rat) protein is Pyridoxine-5'-phosphate oxidase (Pnpo).